A 901-amino-acid polypeptide reads, in one-letter code: Protein translocase subunit SecA (901 aa).

ATP is bound by residues Gln-87, Gly-105–Thr-109, and Asp-512. Zn(2+)-binding residues include Cys-885, Cys-887, Cys-896, and His-897.

The protein belongs to the SecA family. As to quaternary structure, monomer and homodimer. Part of the essential Sec protein translocation apparatus which comprises SecA, SecYEG and auxiliary proteins SecDF-YajC and YidC. Zn(2+) serves as cofactor.

It is found in the cell inner membrane. Its subcellular location is the cytoplasm. The catalysed reaction is ATP + H2O + cellular proteinSide 1 = ADP + phosphate + cellular proteinSide 2.. Part of the Sec protein translocase complex. Interacts with the SecYEG preprotein conducting channel. Has a central role in coupling the hydrolysis of ATP to the transfer of proteins into and across the cell membrane, serving both as a receptor for the preprotein-SecB complex and as an ATP-driven molecular motor driving the stepwise translocation of polypeptide chains across the membrane. The polypeptide is Protein translocase subunit SecA (Salmonella arizonae (strain ATCC BAA-731 / CDC346-86 / RSK2980)).